Here is a 236-residue protein sequence, read N- to C-terminus: Small ribosomal subunit protein uS3c (236 aa).

Positions 47–127 constitute a KH type-2 domain; that stretch reads VRKYVRSSSR…KLNMTLSQVA (81 aa).

Belongs to the universal ribosomal protein uS3 family. As to quaternary structure, part of the 30S ribosomal subunit.

The protein localises to the plastid. It localises to the chloroplast. This is Small ribosomal subunit protein uS3c (rps3) from Zygnema circumcarinatum (Green alga).